We begin with the raw amino-acid sequence, 68 residues long: MAEMKTADIRAMSPDQKDDAVAELKKERFNLRFQRATGQLENTSRLREARRDIARIKTIAAQQRDAKK.

It belongs to the universal ribosomal protein uL29 family.

This is Large ribosomal subunit protein uL29 from Rhodopseudomonas palustris (strain BisB18).